We begin with the raw amino-acid sequence, 691 residues long: DNA ligase (691 aa).

NAD(+)-binding positions include 41–45 (DAEYD), 90–91 (SL), and Glu-130. Lys-132 acts as the N6-AMP-lysine intermediate in catalysis. The NAD(+) site is built by Arg-153, Glu-190, Lys-307, and Lys-331. Residues Cys-425, Cys-428, Cys-443, and Cys-449 each coordinate Zn(2+). The BRCT domain occupies 610–691 (APQGVLAGKT…LHQLLEGNTP (82 aa)).

Belongs to the NAD-dependent DNA ligase family. LigA subfamily. Requires Mg(2+) as cofactor. The cofactor is Mn(2+).

The catalysed reaction is NAD(+) + (deoxyribonucleotide)n-3'-hydroxyl + 5'-phospho-(deoxyribonucleotide)m = (deoxyribonucleotide)n+m + AMP + beta-nicotinamide D-nucleotide.. In terms of biological role, DNA ligase that catalyzes the formation of phosphodiester linkages between 5'-phosphoryl and 3'-hydroxyl groups in double-stranded DNA using NAD as a coenzyme and as the energy source for the reaction. It is essential for DNA replication and repair of damaged DNA. This is DNA ligase from Burkholderia ambifaria (strain MC40-6).